Consider the following 1032-residue polypeptide: MALIMEPVSKWSPSQVVDWMKGLDDCLQQYIKNFEREKISGDQLLRITHQELEDLGVSRIGHQELILEAVDLLCALNYGLETENLKTLSHKLNASAKNLQNFITGRRRSGHYDGRTSRKLPNDFLTSVVDLIGAAKSLLAWLDRSPFAAVTDYSVTRNNVIQLCLELTTIVQQDCTVYETENKILHVCKTLSGVCDHIISLSSDPLVSQSAHLEVIQLANIKPSEGLGMYIKSTYDGLHVITGTTENSPADRCKKIHAGDEVIQVNHQTVVGWQLKNLVNALREDPSGVILTLKKRPQSMLTSAPALLKNMRWKPLALQPLIPRSPTSSVATPSSTISTPTKRDSSALQDLYIPPPPAEPYIPRDEKGNLPCEDLRGHMVGKPVHKGSESPNSFLDQEYRKRFNIVEEDTVLYCYEYEKGRSSSQGRRESTPTYGKLRPISMPVEYNWVGDYEDPNKMKRDSRRENSLLRYMSNEKIAQEEYMFQRNSKKDTGKKSKKKGDKSNSPAHYSLLPSLQMDALRQDIMGTPVPETTLYHTFQQSSLQHKSKKKNKGAISGKSKRRISCKDLGRGDCEGWLWKKKDAKSYFSQKWKKYWFVLKDASLYWYINEEDEKAEGFISLPEFKIDRASECRKKYAFKACHPKIKSFYFAAEHLDDMNRWLNRINMLTAGYAERERIKQEQDYWSESDKEEADTPSTPKQDSPPPPYDTYPRPPSMSCASPYVEAKHSRLSSTETSQSQSSHEEFRQEVTGSSAVSPIRKTASQRRSWQDLIETPLTSSGLHYLQTLPLEDSVFSDSAAISPEHRRQSTLPTQKCHLQDHYGPYPLAESERMQVLNGNGGKPRSFTLPRDSGFNHCCLNTPVSACDPQDDIQPPEVEEEEEEEEEEAAGENVGEKNENREEKLGDSLQDLYRALEEASLSPLGEHRISTKMEYKLSFIKRCNDPVMNEKLHRLRILKSTLKAREGEVAIIDKVLDNPDLTSKEFQQWKQMYLDLFLDICQSTTSNDPLSISSEVDVLTSSLTHTHSYIETHV.

The region spanning 11 to 76 (WSPSQVVDWM…LEAVDLLCAL (66 aa)) is the SAM domain. Serine 12 bears the Phosphoserine mark. The CRIC domain occupies 84–178 (NLKTLSHKLN…TIVQQDCTVY (95 aa)). Positions 215–297 (VIQLANIKPS…GVILTLKKRP (83 aa)) constitute a PDZ domain. Residues 302–515 (TSAPALLKNM…PAHYSLLPSL (214 aa)) form the DUF1170 domain. Positions 324 to 340 (RSPTSSVATPSSTISTP) are enriched in low complexity. Positions 324–349 (RSPTSSVATPSSTISTPTKRDSSALQ) are disordered. Phosphoserine occurs at positions 338 and 390. Disordered regions lie at residues 480-509 (EEYM…PAHY) and 538-558 (FQQS…ISGK). The span at 545–558 (HKSKKKNKGAISGK) shows a compositional bias: basic residues. The 100-residue stretch at 570–669 (RGDCEGWLWK…WLNRINMLTA (100 aa)) folds into the PH domain. Residues 682-766 (DYWSESDKEE…PIRKTASQRR (85 aa)) are disordered. Tyrosine 683 carries the post-translational modification Phosphotyrosine. The segment covering 683–693 (YWSESDKEEAD) has biased composition (acidic residues). Phosphoserine is present on residues serine 685 and serine 687. Positions 701–714 (DSPPPPYDTYPRPP) are enriched in pro residues. Low complexity predominate over residues 730–740 (LSSTETSQSQS). Phosphoserine is present on residues serine 756 and serine 767. The interval 864–900 (ACDPQDDIQPPEVEEEEEEEEEEAAGENVGEKNENRE) is disordered. Residues 874 to 917 (PEVEEEEEEEEEEAAGENVGEKNENREEKLGDSLQDLYRALEEA) adopt a coiled-coil conformation. The span at 875 to 888 (EVEEEEEEEEEEAA) shows a compositional bias: acidic residues. Residue serine 906 is modified to Phosphoserine.

Belongs to the CNKSR family. Interacts with RAF1, RAB2L and RAL GTPase proteins. Phosphorylated on tyrosine.

It localises to the cytoplasm. The protein localises to the membrane. Functionally, may function as an adapter protein or regulator of Ras signaling pathways. This is Connector enhancer of kinase suppressor of ras 2 (Cnksr2) from Mus musculus (Mouse).